We begin with the raw amino-acid sequence, 460 residues long: Argininosuccinate lyase (460 aa).

Belongs to the lyase 1 family. Argininosuccinate lyase subfamily.

It is found in the cytoplasm. The catalysed reaction is 2-(N(omega)-L-arginino)succinate = fumarate + L-arginine. It functions in the pathway amino-acid biosynthesis; L-arginine biosynthesis; L-arginine from L-ornithine and carbamoyl phosphate: step 3/3. The protein is Argininosuccinate lyase of Lawsonia intracellularis (strain PHE/MN1-00).